The sequence spans 79 residues: ATP synthase subunit c (79 aa).

2 helical membrane passes run 11–31 (MAAAVMMGLAAIGAAIGIGIL) and 53–73 (FFIVMGLVDAIPMIAVGLGLY).

It belongs to the ATPase C chain family. As to quaternary structure, F-type ATPases have 2 components, F(1) - the catalytic core - and F(0) - the membrane proton channel. F(1) has five subunits: alpha(3), beta(3), gamma(1), delta(1), epsilon(1). F(0) has three main subunits: a(1), b(2) and c(10-14). The alpha and beta chains form an alternating ring which encloses part of the gamma chain. F(1) is attached to F(0) by a central stalk formed by the gamma and epsilon chains, while a peripheral stalk is formed by the delta and b chains.

It is found in the cell inner membrane. Functionally, f(1)F(0) ATP synthase produces ATP from ADP in the presence of a proton or sodium gradient. F-type ATPases consist of two structural domains, F(1) containing the extramembraneous catalytic core and F(0) containing the membrane proton channel, linked together by a central stalk and a peripheral stalk. During catalysis, ATP synthesis in the catalytic domain of F(1) is coupled via a rotary mechanism of the central stalk subunits to proton translocation. In terms of biological role, key component of the F(0) channel; it plays a direct role in translocation across the membrane. A homomeric c-ring of between 10-14 subunits forms the central stalk rotor element with the F(1) delta and epsilon subunits. This is ATP synthase subunit c from Citrobacter koseri (strain ATCC BAA-895 / CDC 4225-83 / SGSC4696).